The chain runs to 100 residues: Small ribosomal subunit protein uS14 (100 aa).

Belongs to the universal ribosomal protein uS14 family. In terms of assembly, part of the 30S ribosomal subunit. Contacts proteins S3 and S10.

Its function is as follows. Binds 16S rRNA, required for the assembly of 30S particles and may also be responsible for determining the conformation of the 16S rRNA at the A site. The sequence is that of Small ribosomal subunit protein uS14 from Nostoc sp. (strain PCC 7120 / SAG 25.82 / UTEX 2576).